We begin with the raw amino-acid sequence, 150 residues long: Putative solute carrier family 19 member 4 (150 aa).

Residues 118–137 (PSVREGACNEKSTENKKPQD) form a disordered region. The span at 124–136 (ACNEKSTENKKPQ) shows a compositional bias: basic and acidic residues.

It belongs to the reduced folate carrier (RFC) transporter (TC 2.A.48) family.

In Homo sapiens (Human), this protein is Putative solute carrier family 19 member 4.